The sequence spans 430 residues: Adenylosuccinate synthetase (430 aa).

Residues Gly12–Lys18 and Gly40–Thr42 contribute to the GTP site. The Proton acceptor role is filled by Asp13. Mg(2+) contacts are provided by Asp13 and Gly40. IMP-binding positions include Asp13–Lys16, Asn38–His41, Thr129, Arg143, Gln223, Thr238, and Arg302. The active-site Proton donor is the His41. A substrate-binding site is contributed by Thr298–Arg304. Residues Arg304, Lys330–Asp332, and Ser412–Gly414 each bind GTP.

The protein belongs to the adenylosuccinate synthetase family. Homodimer. Requires Mg(2+) as cofactor.

The protein resides in the cytoplasm. The enzyme catalyses IMP + L-aspartate + GTP = N(6)-(1,2-dicarboxyethyl)-AMP + GDP + phosphate + 2 H(+). Its pathway is purine metabolism; AMP biosynthesis via de novo pathway; AMP from IMP: step 1/2. In terms of biological role, plays an important role in the de novo pathway of purine nucleotide biosynthesis. Catalyzes the first committed step in the biosynthesis of AMP from IMP. The chain is Adenylosuccinate synthetase from Desulforudis audaxviator (strain MP104C).